The primary structure comprises 524 residues: Lysophospholipid acyltransferase LPCAT4 (524 aa).

2 consecutive transmembrane segments (helical) span residues 40–62 (CLLG…FLLW) and 87–107 (TVCH…LGFL). Positions 129–134 (HSTFFD) match the HXXXXD motif motif. N152 carries N-linked (GlcNAc...) asparagine glycosylation. The segment at 489 to 524 (PPHTSRGTSQTPNASSPGNPTALANGTVQAPKQKGD) is disordered. Positions 493–518 (SRGTSQTPNASSPGNPTALANGTVQA) are enriched in polar residues.

Belongs to the 1-acyl-sn-glycerol-3-phosphate acyltransferase family. In terms of tissue distribution, widely expressed with predominant level in brain.

The protein resides in the endoplasmic reticulum membrane. The catalysed reaction is a 1-acyl-sn-glycero-3-phosphoethanolamine + an acyl-CoA = a 1,2-diacyl-sn-glycero-3-phosphoethanolamine + CoA. It catalyses the reaction a 1-O-(1Z-alkenyl)-sn-glycero-3-phosphoethanolamine + an acyl-CoA = a 1-O-(1Z-alkenyl)-2-acyl-sn-glycero-3-phosphoethanolamine + CoA. The enzyme catalyses a 1-acyl-sn-glycero-3-phosphocholine + an acyl-CoA = a 1,2-diacyl-sn-glycero-3-phosphocholine + CoA. It carries out the reaction a 1-O-alkyl-sn-glycero-3-phosphocholine + acetyl-CoA = a 1-O-alkyl-2-acetyl-sn-glycero-3-phosphocholine + CoA. The catalysed reaction is a 1-acyl-sn-glycero-3-phospho-L-serine + an acyl-CoA = a 1,2-diacyl-sn-glycero-3-phospho-L-serine + CoA. It catalyses the reaction octanoyl-CoA + a 1-acyl-sn-glycero-3-phosphoethanolamine = 1-acyl-2-octanoyl-sn-glycero-3-phosphoethanolamine + CoA. The enzyme catalyses a 1-acyl-sn-glycero-3-phosphoethanolamine + hexadecanoyl-CoA = 1-acyl-2-hexadecanoyl-sn-glycero-3-phosphoethanolamine + CoA. It carries out the reaction a 1-acyl-sn-glycero-3-phosphoethanolamine + octadecanoyl-CoA = 1-acyl-2-octadecanoyl-sn-glycero-3-phosphoethanolamine + CoA. The catalysed reaction is a 1-acyl-sn-glycero-3-phosphoethanolamine + (9Z)-octadecenoyl-CoA = 1-acyl-2-(9Z)-octadecenoyl-sn-glycero-3-phosphoethanolamine + CoA. It catalyses the reaction a 1-acyl-sn-glycero-3-phosphoethanolamine + (5Z,8Z,11Z,14Z)-eicosatetraenoyl-CoA = 1-acyl-2-(5Z,8Z,11Z,14Z)-eicosatetraenoyl-sn-glycero-3-phosphoethanolamine + CoA. The enzyme catalyses a 1-O-(1Z-alkenyl)-sn-glycero-3-phosphoethanolamine + octanoyl-CoA = 1-O-(1Z)-alkenyl-2-octanoyl-sn-glycero-3-phosphoethanolamine + CoA. It carries out the reaction a 1-O-(1Z-alkenyl)-sn-glycero-3-phosphoethanolamine + hexadecanoyl-CoA = 1-O-(1Z)-alkenyl-2-hexadecanoyl-sn-glycero-3-phosphoethanolamine + CoA. The catalysed reaction is a 1-O-(1Z-alkenyl)-sn-glycero-3-phosphoethanolamine + octadecanoyl-CoA = 1-O-(1Z)-alkenyl-2-octadecanoyl-sn-glycero-3-phosphoethanolamine + CoA. It catalyses the reaction a 1-O-(1Z-alkenyl)-sn-glycero-3-phosphoethanolamine + (9Z)-octadecenoyl-CoA = 1-O-(1Z)-alkenyl-2-(9Z)-octadecenoyl-sn-glycero-3-phosphoethanolamine + CoA. The enzyme catalyses a 1-O-(1Z-alkenyl)-sn-glycero-3-phosphoethanolamine + (5Z,8Z,11Z,14Z)-eicosatetraenoyl-CoA = 1-O-(1Z)-alkenyl-2-(5Z,8Z,11Z,14Z)-eicosatetraenoyl-sn-glycero-3-phosphoethanolamine + CoA. It carries out the reaction a 1-acyl-sn-glycero-3-phosphocholine + hexadecanoyl-CoA = 1-acyl-2-hexadecanoyl-sn-glycero-3-phosphocholine + CoA. The catalysed reaction is a 1-acyl-sn-glycero-3-phosphocholine + (9Z)-octadecenoyl-CoA = a 1-acyl-2-(9Z)-octadecenoyl-sn-glycero-3-phosphocholine + CoA. It catalyses the reaction 1-O-hexadecyl-sn-glycero-3-phosphocholine + (9Z)-octadecenoyl-CoA = 1-O-hexadecyl-2-(9Z)-octadecenoyl-sn-glycero-3-phosphocholine + CoA. The enzyme catalyses 1-O-hexadecyl-sn-glycero-3-phosphocholine + (5Z,8Z,11Z,14Z)-eicosatetraenoyl-CoA = 1-O-hexadecyl-2-(5Z,8Z,11Z,14Z)-eicosatetraenoyl-sn-glycero-3-phosphocholine + CoA. It carries out the reaction 1-hexadecanoyl-sn-glycero-3-phospho-L-serine + (9Z)-octadecenoyl-CoA = 1-hexadecanoyl-2-(9Z-octadecenoyl)-sn-glycero-3-phospho-L-serine + CoA. The catalysed reaction is 1-octadecanoyl-sn-glycero-3-phospho-(1'-sn-glycerol) + (9Z)-octadecenoyl-CoA = 1-octadecanoyl-2-(9Z-octadecenoyl)-sn-glycero-3-phospho-(1'-sn-glycerol) + CoA. It catalyses the reaction 1-octadecanoyl-sn-glycero-3-phospho-(1'-sn-glycerol) + (5Z,8Z,11Z,14Z)-eicosatetraenoyl-CoA = 1-octadecanoyl-2-(5Z,8Z,11Z,14Z-eicosatetraenoyl)-sn-glycero-3-phospho-(1'-sn-glycerol) + CoA. It participates in lipid metabolism; phospholipid metabolism. Displays acyl-CoA-dependent lysophospholipid acyltransferase activity with a subset of lysophospholipids as substrates; converts lysophosphatidylethanolamine to phosphatidylethanolamine, lysophosphatidylcholine to phosphatidycholine, 1-alkenyl-lysophatidylethanolamine to 1-alkenyl-phosphatidylethanolamine, lysophosphatidylglycerol and alkyl-lysophosphatidylcholine to phosphatidylglycerol and alkyl-phosphatidylcholine, respectively. In contrast, has no lysophosphatidylinositol, glycerol-3-phosphate, diacylglycerol or lysophosphatidic acid acyltransferase activity. Prefers long chain acyl-CoAs (C16, C18) as acyl donors. The polypeptide is Lysophospholipid acyltransferase LPCAT4 (LPCAT4) (Homo sapiens (Human)).